We begin with the raw amino-acid sequence, 354 residues long: Glycerol-1-phosphate dehydrogenase [NAD(P)+] (354 aa).

NAD(+) is bound by residues 102–106 and 124–127; these read GRSID and TAAS. D129 is a substrate binding site. S133 contributes to the NAD(+) binding site. D176 is a substrate binding site. 2 residues coordinate Zn(2+): D176 and H256. Residue H260 participates in substrate binding. Position 272 (H272) interacts with Zn(2+).

It belongs to the glycerol-1-phosphate dehydrogenase family. The cofactor is Zn(2+).

It localises to the cytoplasm. It catalyses the reaction sn-glycerol 1-phosphate + NAD(+) = dihydroxyacetone phosphate + NADH + H(+). The catalysed reaction is sn-glycerol 1-phosphate + NADP(+) = dihydroxyacetone phosphate + NADPH + H(+). The protein operates within membrane lipid metabolism; glycerophospholipid metabolism. Functionally, catalyzes the NAD(P)H-dependent reduction of dihydroxyacetonephosphate (DHAP or glycerone phosphate) to glycerol 1-phosphate (G1P). The G1P thus generated is used as the glycerophosphate backbone of phospholipids in the cellular membranes of Archaea. In Methanothrix thermoacetophila (strain DSM 6194 / JCM 14653 / NBRC 101360 / PT) (Methanosaeta thermophila), this protein is Glycerol-1-phosphate dehydrogenase [NAD(P)+].